Consider the following 341-residue polypeptide: Protein phosphatase methylesterase 1 (341 aa).

A disordered region spans residues 1–24; it reads MAFRKEELSQTLYENESEQSSETK. Polar residues predominate over residues 9-20; sequence SQTLYENESEQS. Residues Ser153, Asp178, and His304 contribute to the active site.

Belongs to the AB hydrolase superfamily.

It carries out the reaction [phosphatase 2A protein]-C-terminal L-leucine methyl ester + H2O = [phosphatase 2A protein]-C-terminal L-leucine + methanol + H(+). In terms of biological role, demethylates proteins that have been reversibly carboxymethylated. Demethylates the phosphatase PP2A catalytic subunit. The polypeptide is Protein phosphatase methylesterase 1 (ppe1) (Schizosaccharomyces pombe (strain 972 / ATCC 24843) (Fission yeast)).